A 394-amino-acid chain; its full sequence is Olfactomedin-like protein 3B (394 aa).

Residues 1 to 18 form the signal peptide; sequence MKATIFFLLLTVLAHSRS. Positions 29 to 94 form a coiled coil; that stretch reads LENRMLAMEE…RVDRVEREMD (66 aa). An Olfactomedin-like domain is found at 132 to 383; the sequence is VCVNIISSLK…QILYKLELKK (252 aa). The cysteines at positions 133 and 310 are disulfide-linked. N-linked (GlcNAc...) asparagine glycans are attached at residues N169, N204, and N233.

It belongs to the OLFML3 family.

It localises to the secreted. Its function is as follows. Secreted scaffold protein that plays an essential role in dorsoventral patterning during early development. Stabilizes axial formation by restricting chordin (CHRD) activity on the dorsal side. Acts by facilitating the association between the tolloid proteases and their substrate chordin (CHRD), leading to enhance chordin (CHRD) degradation. The polypeptide is Olfactomedin-like protein 3B (olfml3b) (Danio rerio (Zebrafish)).